Consider the following 397-residue polypeptide: 2,3-bisphosphoglycerate-independent phosphoglycerate mutase (397 aa).

Belongs to the BPG-independent phosphoglycerate mutase family. A-PGAM subfamily.

The enzyme catalyses (2R)-2-phosphoglycerate = (2R)-3-phosphoglycerate. It participates in carbohydrate degradation; glycolysis; pyruvate from D-glyceraldehyde 3-phosphate: step 3/5. In terms of biological role, catalyzes the interconversion of 2-phosphoglycerate and 3-phosphoglycerate. The polypeptide is 2,3-bisphosphoglycerate-independent phosphoglycerate mutase (apgM) (Methanosarcina mazei (strain ATCC BAA-159 / DSM 3647 / Goe1 / Go1 / JCM 11833 / OCM 88) (Methanosarcina frisia)).